Consider the following 180-residue polypeptide: uncharacterized protein (180 aa).

Coiled-coil stretches lie at residues 3–82 (LKSL…QKIA) and 95–179 (REYE…EKYG).

This is an uncharacterized protein from Aquifex aeolicus (strain VF5).